We begin with the raw amino-acid sequence, 132 residues long: Holo-[acyl-carrier-protein] synthase (132 aa).

2 residues coordinate Mg(2+): aspartate 8 and glutamate 57.

The protein belongs to the P-Pant transferase superfamily. AcpS family. Mg(2+) is required as a cofactor.

The protein localises to the cytoplasm. It catalyses the reaction apo-[ACP] + CoA = holo-[ACP] + adenosine 3',5'-bisphosphate + H(+). In terms of biological role, transfers the 4'-phosphopantetheine moiety from coenzyme A to a Ser of acyl-carrier-protein. The chain is Holo-[acyl-carrier-protein] synthase from Methylobacterium nodulans (strain LMG 21967 / CNCM I-2342 / ORS 2060).